Consider the following 251-residue polypeptide: MGKRLRVQRHGRGTPQWRNRGHLRVAPGRYPSPEVLKLDETYEGYVVELKHDPGRWVPLAHIVIPNVADFWIPAAEGMYTGQKVQIGPNAAPVNGNILPLYAIPEGTQIFNVEIRPGDGGKLARSGGAYAILVGKSGNSAIIQLPSGKVKQVNAKARATIGIAAGAGRDEKPLLKAGNAYYKWKAKAKKWPVVRGVAMNAVNHPHGGGNHQSPGYPTTVARNAPPGQKVGHIAARCTGRGCKQAKARLGLK.

The span at Met-1–Arg-12 shows a compositional bias: basic residues. The disordered stretch occupies residues Met-1–His-22.

It belongs to the universal ribosomal protein uL2 family. Part of the 50S ribosomal subunit. Forms a bridge to the 30S subunit in the 70S ribosome.

Functionally, one of the primary rRNA binding proteins. Required for association of the 30S and 50S subunits to form the 70S ribosome, for tRNA binding and peptide bond formation. It has been suggested to have peptidyltransferase activity; this is somewhat controversial. Makes several contacts with the 16S rRNA in the 70S ribosome. This is Large ribosomal subunit protein uL2 from Ignicoccus hospitalis (strain KIN4/I / DSM 18386 / JCM 14125).